Reading from the N-terminus, the 475-residue chain is Ankyrin repeat, SAM and basic leucine zipper domain-containing protein 1 (475 aa).

Positions 1–24 (MAAGTVRGLAVAGGGESSESEDDG) are disordered. Phosphoserine occurs at positions 17, 18, and 20. 6 ANK repeats span residues 45-74 (EKNE…SVDS), 78-107 (YGWT…NASF), 110-144 (DKQT…DPNV), 148-177 (RLMT…EVNA), 181-210 (NGYT…NKML), and 214-243 (DGKT…PLEG). Residues 272–334 (SYTAFGDLEI…KILAALKELE (63 aa)) enclose the SAM domain.

As to quaternary structure, interacts with DDX4, PIWIL1, RANBP9 and TDRD1.

The protein localises to the cytoplasm. Its function is as follows. Plays a central role during spermatogenesis by repressing transposable elements and preventing their mobilization, which is essential for the germline integrity. Acts via the piRNA metabolic process, which mediates the repression of transposable elements during meiosis by forming complexes composed of piRNAs and Piwi proteins and governs the methylation and subsequent repression of transposons. Its association with pi-bodies suggests a participation in the primary piRNAs metabolic process. Required prior to the pachytene stage to facilitate the production of multiple types of piRNAs, including those associated with repeats involved in the regulation of retrotransposons. May act by mediating protein-protein interactions during germ cell maturation. The sequence is that of Ankyrin repeat, SAM and basic leucine zipper domain-containing protein 1 (ASZ1) from Neofelis nebulosa (Clouded leopard).